A 536-amino-acid polypeptide reads, in one-letter code: CRISPR-associated DNA-binding protein Cas12m (536 aa).

Residues 1 to 59 (MPFGKKARHVKAYQFGADAPQEGMEAVLEQHRLRTDYYNALVEMELRQREERTALLANL) are recognition domain (REC1-N). Residues 60-105 (AAESGLESPNQVYERLKAAGEKGIRKHPEYVAARERQKALYGHPRL) are recognition domain (REC2). A recognition domain (REC1-C) region spans residues 106–159 (LELQSRQREERNALRRSFGAKGLYSSNYLDVERAFDKARQSPELRFRRYSPHEG). Residues 160 to 257 (RLAVLYTEGL…RWTVSVVVEV (98 aa)) form a wedge domain (WED) region. The tract at residues 258 to 270 (EGPPVASPTGRGA) is linker. Positions 271-481 (VAVDLGWRRV…QRGKPVRKLN (211 aa)) are ruvC-I. The target nucleic-acid binding (TNB) stretch occupies residues 482 to 516 (PAHTTTDCHACGGALVGDPAKELRLYCPTCERFYD). Positions 489, 492, 508, and 511 each coordinate Zn(2+). Residues 517–536 (QDENAARNLLRRAQEVQAQV) are ruvC-II. D518 contributes to the Mg(2+) binding site.

Belongs to the CRISPR-associated DNA-binding protein Cas12m family. Requires Mg(2+) as cofactor. Zn(2+) is required as a cofactor.

With respect to regulation, pre-crRNA processing is inhibited by EDTA. Its function is as follows. CRISPR (clustered regularly interspaced short palindromic repeat), is an adaptive immune system that provides protection against mobile genetic elements (viruses, transposable elements and conjugative plasmids). CRISPR clusters contain sequences complementary to antecedent mobile elements and target invading nucleic acids. CRISPR clusters are transcribed and processed into CRISPR RNA (crRNA). Recognizes a short motif in the CRISPR repeat sequences (the 5' PAM or protospacer adjacent motif, 5'-TT/CN-3' in this organism) to help distinguish self versus nonself, as targets within the bacterial CRISPR locus do not have PAMs. Cas12m-crRNA binds DNA in a PAM-dependent, crRNA-guided fashion. DNA-binding probably inhibits transcription, leading to gene silencing. No dsDNA, ssDNA or RNA nuclease activity is seen for the crRNA-Cas12m complex. Upon expression in E.coli as a CRISPR region preferentially binds to its associated crRNA. Is required to process pre-crRNA to mature crRNA without a tracrRNA; processing is Mg(2+)-dependent and does not require the predicted RuvC domain catalytic site. This is CRISPR-associated DNA-binding protein Cas12m from Allomeiothermus silvanus (strain ATCC 700542 / DSM 9946 / NBRC 106475 / NCIMB 13440 / VI-R2) (Thermus silvanus).